The chain runs to 102 residues: NADH-quinone oxidoreductase subunit K 1 (102 aa).

Helical transmembrane passes span 5–25, 31–51, and 65–85; these read LSHY…GIFL, IVIL…MVAF, and LFIL…LVVF.

It belongs to the complex I subunit 4L family. In terms of assembly, NDH-1 is composed of 14 different subunits. Subunits NuoA, H, J, K, L, M, N constitute the membrane sector of the complex.

The protein resides in the cell inner membrane. It catalyses the reaction a quinone + NADH + 5 H(+)(in) = a quinol + NAD(+) + 4 H(+)(out). NDH-1 shuttles electrons from NADH, via FMN and iron-sulfur (Fe-S) centers, to quinones in the respiratory chain. The immediate electron acceptor for the enzyme in this species is believed to be ubiquinone. Couples the redox reaction to proton translocation (for every two electrons transferred, four hydrogen ions are translocated across the cytoplasmic membrane), and thus conserves the redox energy in a proton gradient. The polypeptide is NADH-quinone oxidoreductase subunit K 1 (Rhizobium etli (strain ATCC 51251 / DSM 11541 / JCM 21823 / NBRC 15573 / CFN 42)).